Here is a 547-residue protein sequence, read N- to C-terminus: Pyochelin synthase PchD (547 aa).

This sequence belongs to the ATP-dependent AMP-binding enzyme family.

It catalyses the reaction salicylate + holo-[ACP] + ATP = salicyl-[ACP] + AMP + diphosphate. It functions in the pathway siderophore biosynthesis. It participates in antifungal biosynthesis. Involved in the biosynthesis of the siderophore pyochelin. Specifically adenylates salicylate and loads it onto the holo form of PchE via a thioester linkage to the phosphopanthetheine moiety. Is also involved in the synthesis of the antifungal antibiotic dihydroaeruginoic acid (Dha or hydroxyphenyl-thiazolinyl-carboxylate), a precursor of pyochelin. The chain is Pyochelin synthase PchD from Pseudomonas aeruginosa (strain UCBPP-PA14).